The primary structure comprises 105 residues: Cell division protein FtsL (105 aa).

Over 1–22 the chain is Cytoplasmic; sequence MIGNERHGLVGVIGADLIRNAK. The chain crosses the membrane as a helical span at residues 23–43; that stretch reads IPLILLVAVLISAVLVVTTAH. Residues 44–105 lie on the Periplasmic side of the membrane; it reads RTRLLTAERE…DPSQENIVIK (62 aa).

The protein belongs to the FtsL family. Part of a complex composed of FtsB, FtsL and FtsQ.

It localises to the cell inner membrane. Essential cell division protein. May link together the upstream cell division proteins, which are predominantly cytoplasmic, with the downstream cell division proteins, which are predominantly periplasmic. This Yersinia pestis protein is Cell division protein FtsL.